The chain runs to 248 residues: uncharacterized protein (248 aa).

A signal peptide spans 1-26 (MVAPRISPKIVLVGFALFAIISASLA).

This is an uncharacterized protein from Acanthamoeba polyphaga mimivirus (APMV).